A 429-amino-acid chain; its full sequence is SET domain-containing protein 8 (429 aa).

An SET domain is found at 17 to 232; the sequence is KQITIKKIRK…ENEEVTINYG (216 aa).

It belongs to the class V-like SAM-binding methyltransferase superfamily.

Its subcellular location is the cytoplasm. The protein localises to the nucleus. The chain is SET domain-containing protein 8 (set8) from Schizosaccharomyces pombe (strain 972 / ATCC 24843) (Fission yeast).